The following is a 167-amino-acid chain: Peptidoglycan L-alanyl-D-glutamate endopeptidase CwlK (167 aa).

The N-terminal stretch at 1–26 is a signal peptide; that stretch reads MNLPAKTFVILCILFLLDLCFSYIRH.

The protein belongs to the peptidase M15C family.

Its subcellular location is the cell membrane. Its function is as follows. Cleaves the linkage of the L-alanine-D-glutamic acid of B.subtilis cell wall. In Bacillus subtilis (strain 168), this protein is Peptidoglycan L-alanyl-D-glutamate endopeptidase CwlK (cwlK).